The primary structure comprises 255 residues: Cysteine protease avirulence protein AvrRpt2 (255 aa).

Residues 1–50 (MKIAPVAINHSPLSREVPSHAAPTQAKQTNLQSEAGDLDARKSSASSPET) form a disordered region. Positions 1–71 (MKIAPVAINH…RHKIEVPAFG (71 aa)) are cleaved as a propeptide — removed in mature form. The determinants of cleavage specificity stretch occupies residues 70 to 71 (FG). A disordered region spans residues 76–100 (KKSSKHETGGSSANADSSSVASDST). The segment covering 86–98 (SSANADSSSVASD) has biased composition (low complexity). Residue Cys122 is the Nucleophile of the active site. Catalysis depends on residues His208 and Asp226.

It belongs to the peptidase C70 family. In terms of assembly, interacts physically with plant cell ROC1 (Arabidopsis single-domain cyclophilin) and RIN4. In terms of processing, autocleaved inside plant cells upon activation by cyclophilin. Cleavage is crucial in subcellular location and in eliciting HR. Inhibited by cyclosporin A (cyclophilin inhibitor).

The protein localises to the secreted. Its subcellular location is the host cell membrane. Its function is as follows. Effector protein involved in gene-for-gene resistance in plants expressing RPS2. Its thiol protease activity is required for the degradation of plant cell RIN4 and consequent activation of RPS2 during bacterial infection. The activation of RPS2 is sufficient for the induction of hypersensitive response (HR) and plant resistance. Cleavage of RIN4 by AvrRpt2 also interferes with RPM1-mediated resistance activated by either AvrRpm1 or AvrB. Contributes to virulence in plants lacking the resistance protein RPS2 promoting pathogen growth and disease symptoms. Inhibits PAMP (pathogen-associated molecular patterns)-induced signaling compromising the host's basal defense system. Blocks plant callose deposition, flg22 (a peptide corresponding to the most conserved domain of flagellin) induced accumulation of PR-1, PR-2 and PR-5 and activation of GST6 transcription. The mechanism of virulence is unknown, but this activity is independent of ethylene and salicylic acid response pathways and independent of RIN4 disappearance. This chain is Cysteine protease avirulence protein AvrRpt2 (avrRpt2), found in Pseudomonas syringae pv. tomato.